A 541-amino-acid chain; its full sequence is Membrane protein insertase YidC (541 aa).

Transmembrane regions (helical) follow at residues 7-27 (LLVI…QLDY), 346-368 (IVQN…LYPL), 416-436 (LGGC…YWTF), 454-474 (LSAQ…MFLL), and 495-515 (PLIF…YWLV).

It belongs to the OXA1/ALB3/YidC family. Type 1 subfamily. As to quaternary structure, interacts with the Sec translocase complex via SecD. Specifically interacts with transmembrane segments of nascent integral membrane proteins during membrane integration.

The protein resides in the cell inner membrane. In terms of biological role, required for the insertion and/or proper folding and/or complex formation of integral membrane proteins into the membrane. Involved in integration of membrane proteins that insert both dependently and independently of the Sec translocase complex, as well as at least some lipoproteins. Aids folding of multispanning membrane proteins. In Pasteurella multocida (strain Pm70), this protein is Membrane protein insertase YidC.